The chain runs to 798 residues: Cadherin-20 (798 aa).

The first 35 residues, 1 to 35 (MWTSGRMSNAKNLFGLGVSLYFWGLMDLTTTVLSG), serve as a signal peptide directing secretion. The propeptide occupies 36 to 58 (SARPLTEGPEDNLSDKLHQRMKR). A glycan (N-linked (GlcNAc...) asparagine) is linked at asparagine 47. The Extracellular segment spans residues 59 to 618 (SWVWNQFFVL…AYVLPVSLSR (560 aa)). 5 consecutive Cadherin domains span residues 60-164 (WVWN…EPKF), 165-273 (LDGP…PPRF), 274-392 (PQKH…EPSF), 389-493 (EPSF…APEF), and 493-615 (FARF…LPVS). The Cell attachment site motif lies at 88 to 90 (RGD). Residue asparagine 260 is glycosylated (N-linked (GlcNAc...) asparagine). Asparagine 419, asparagine 460, and asparagine 541 each carry an N-linked (GlcNAc...) asparagine glycan. Residues 619–639 (GALIAILACIFVLLVLVLLIL) form a helical membrane-spanning segment. Residues 640–798 (SMRRQRKQPY…GATDSSGALW (159 aa)) are Cytoplasmic-facing.

As to expression, detected in embryonic spinal cord, in the brachial and lumbar section of motor neurons (at protein level). Detected in ventro-lateral portion of embryonic spinal cord, in the brachial and lumbar section of embryonic motor neurons. Detected in embryonic adductor motor neurons and embryonic dorsal root ganglion. Detected in the caudal half of newly generated somites and in presomitic mesoderm.

It localises to the cell membrane. In terms of biological role, cadherins are calcium-dependent cell adhesion proteins. They preferentially interact with themselves in a homophilic manner in connecting cells; cadherins may thus contribute to the sorting of heterogeneous cell types. The chain is Cadherin-20 (CDH20) from Gallus gallus (Chicken).